The chain runs to 557 residues: Membrane protein insertase YidC (557 aa).

Transmembrane regions (helical) follow at residues 6–26 (TILW…WQVH), 219–239 (IGPF…IYTD), 367–387 (IVGN…LAFF), 437–457 (LGGC…YWVL), and 514–534 (MPIV…LYWV).

Belongs to the OXA1/ALB3/YidC family. Type 1 subfamily. Interacts with the Sec translocase complex via SecD. Specifically interacts with transmembrane segments of nascent integral membrane proteins during membrane integration.

The protein localises to the cell inner membrane. Functionally, required for the insertion and/or proper folding and/or complex formation of integral membrane proteins into the membrane. Involved in integration of membrane proteins that insert both dependently and independently of the Sec translocase complex, as well as at least some lipoproteins. Aids folding of multispanning membrane proteins. This is Membrane protein insertase YidC from Polynucleobacter asymbioticus (strain DSM 18221 / CIP 109841 / QLW-P1DMWA-1) (Polynucleobacter necessarius subsp. asymbioticus).